We begin with the raw amino-acid sequence, 449 residues long: Ras-related GTP-binding protein D (449 aa).

Positions 1 to 55 are disordered; the sequence is MSQVLGKPQPQGEDGGEDQEEDELVGLAGYEDGPESSDAELDSGPEEGESRRNSW. 2 stretches are compositionally biased toward acidic residues: residues 14–24 and 32–47; these read DGGEDQEEDEL and DGPE…GPEE. GTP contacts are provided by R120, R121, S122, G123, K124, S125, S126, and T140. 9 residues coordinate GDP: R121, S122, G123, K124, S125, S126, T140, E144, and T146. The GTP site is built by T146, G169, H228, K229, and D231. Residues H228, K229, D231, S269, and I270 each coordinate GDP. Residue I270 participates in GTP binding. Residues 428–449 are disordered; sequence KAQSRLPKKTGATPNGTPRVLL.

This sequence belongs to the GTR/RAG GTP-binding protein family. Forms a heterodimer with RRAGA in a sequence-independent manner and RRAGB. Heterodimerization stabilizes RRAG proteins. The GDP-bound form of RRAGD (in complex with the GTP-bound form of RRAGA or RRAGB), interacts with RPTOR, thereby promoting recruitment of mTORC1 to the lysosomes. Component of the lysosomal folliculin complex (LFC), composed of FLCN, FNIP1 (or FNIP2), RagA/RRAGA or RagB/RRAGB GDP-bound, RagC/RRAGC or RagD/RRAGD GTP-bound, and Ragulator. Interacts with NOL8. Interacts with SH3BP4; the interaction with this negative regulator is most probably direct, preferentially occurs with the inactive GDP-bound form of RRAGD and is negatively regulated by amino acids. The Rag heterodimer interacts with SLC38A9; the probable amino acid sensor. Interacts with SESN1, SESN2 and SESN3. The GDP-bound form interacts with TFEB. The GDP-bound form interacts with TFE3. As to expression, expressed in the distal tubule of the kidney.

The protein resides in the cytoplasm. It localises to the nucleus. Its subcellular location is the lysosome membrane. It catalyses the reaction GTP + H2O = GDP + phosphate + H(+). The activation of RagD/RRAGD is mediated by a GTPase activating protein (GAP). In high-amino acid conditions, activated by GTPase activating protein FLCN that stimulates RRAGD GTPase activity to turn it into its active GDP-bound form. In response to amino acid depletion, the GATOR1 complex inactivates RagC/RRAGC by securing the GTP-bound inactive form. Its function is as follows. Guanine nucleotide-binding protein that plays a crucial role in the cellular response to amino acid availability through regulation of the mTORC1 signaling cascade. Forms heterodimeric Rag complexes with RagA/RRAGA or RagB/RRAGB and cycles between an inactive GTP-bound and an active GDP-bound form: RagD/RRAGD is in its active form when GDP-bound RagD/RRAGD forms a complex with GTP-bound RagA/RRAGA (or RagB/RRAGB) and in an inactive form when GTP-bound RagD/RRAGD heterodimerizes with GDP-bound RagA/RRAGA (or RagB/RRAGB). In its active form, promotes the recruitment of mTORC1 to the lysosomes and its subsequent activation by the GTPase RHEB. This is a crucial step in the activation of the MTOR signaling cascade by amino acids. Also plays a central role in the non-canonical mTORC1 complex, which acts independently of RHEB and specifically mediates phosphorylation of MiT/TFE factors TFEB and TFE3: GDP-bound RagD/RRAGD mediates recruitment of MiT/TFE factors TFEB and TFE3. In Mus musculus (Mouse), this protein is Ras-related GTP-binding protein D.